A 126-amino-acid polypeptide reads, in one-letter code: Holo-[acyl-carrier-protein] synthase (126 aa).

Mg(2+)-binding residues include Asp9 and Glu59.

It belongs to the P-Pant transferase superfamily. AcpS family. Mg(2+) is required as a cofactor.

The protein localises to the cytoplasm. The enzyme catalyses apo-[ACP] + CoA = holo-[ACP] + adenosine 3',5'-bisphosphate + H(+). In terms of biological role, transfers the 4'-phosphopantetheine moiety from coenzyme A to a Ser of acyl-carrier-protein. The protein is Holo-[acyl-carrier-protein] synthase of Myxococcus xanthus (strain DK1622).